The primary structure comprises 547 residues: Glucose-6-phosphate isomerase (547 aa).

The Proton donor role is filled by glutamate 350. Catalysis depends on residues histidine 381 and lysine 510.

The protein belongs to the GPI family.

The protein resides in the cytoplasm. It carries out the reaction alpha-D-glucose 6-phosphate = beta-D-fructose 6-phosphate. It functions in the pathway carbohydrate biosynthesis; gluconeogenesis. The protein operates within carbohydrate degradation; glycolysis; D-glyceraldehyde 3-phosphate and glycerone phosphate from D-glucose: step 2/4. Functionally, catalyzes the reversible isomerization of glucose-6-phosphate to fructose-6-phosphate. This Mesorhizobium japonicum (strain LMG 29417 / CECT 9101 / MAFF 303099) (Mesorhizobium loti (strain MAFF 303099)) protein is Glucose-6-phosphate isomerase.